Here is a 240-residue protein sequence, read N- to C-terminus: ATP-dependent dethiobiotin synthetase BioD (240 aa).

13-18 (GVGKTI) serves as a coordination point for ATP. Residue Thr-17 coordinates Mg(2+). Lys-38 is an active-site residue. Residue Thr-42 coordinates substrate. Residues Asp-55, 116–119 (EGVG), and 214–216 (PYL) each bind ATP. Asp-55 and Glu-116 together coordinate Mg(2+).

It belongs to the dethiobiotin synthetase family. In terms of assembly, homodimer. The cofactor is Mg(2+).

It is found in the cytoplasm. The catalysed reaction is (7R,8S)-7,8-diammoniononanoate + CO2 + ATP = (4R,5S)-dethiobiotin + ADP + phosphate + 3 H(+). The protein operates within cofactor biosynthesis; biotin biosynthesis; biotin from 7,8-diaminononanoate: step 1/2. In terms of biological role, catalyzes a mechanistically unusual reaction, the ATP-dependent insertion of CO2 between the N7 and N8 nitrogen atoms of 7,8-diaminopelargonic acid (DAPA, also called 7,8-diammoniononanoate) to form a ureido ring. The polypeptide is ATP-dependent dethiobiotin synthetase BioD (Thermodesulfovibrio yellowstonii (strain ATCC 51303 / DSM 11347 / YP87)).